The following is a 129-amino-acid chain: Small ribosomal subunit protein uS11 (129 aa).

This sequence belongs to the universal ribosomal protein uS11 family. As to quaternary structure, part of the 30S ribosomal subunit. Interacts with proteins S7 and S18. Binds to IF-3.

In terms of biological role, located on the platform of the 30S subunit, it bridges several disparate RNA helices of the 16S rRNA. Forms part of the Shine-Dalgarno cleft in the 70S ribosome. The polypeptide is Small ribosomal subunit protein uS11 (Staphylococcus carnosus (strain TM300)).